The chain runs to 120 residues: Protein ORF-C (120 aa).

Its subcellular location is the host mitochondrion. Induces alteration of mitochondrial function that results in apoptosis contributing to tumor regression. This is Protein ORF-C (orfC) from Walleye dermal sarcoma virus (WDSV).